The primary structure comprises 218 residues: Capsid protein (218 aa).

M1 carries the N-acetylmethionine; by host modification. Positions 1–10 (MDKSESASAG) are enriched in low complexity. Positions 1–30 (MDKSESASAGRNRRRRPRRGSRSASSSSDA) are disordered. Over residues 11-21 (RNRRRRPRRGS) the composition is skewed to basic residues.

Belongs to the cucumovirus capsid protein family.

It localises to the virion. Capsid protein. Probably binds RNA and plays a role in packaging. The polypeptide is Capsid protein (Cucumis sativus (Cucumber)).